The primary structure comprises 24 residues: Brevinin-1R (24 aa).

Cysteines 18 and 24 form a disulfide.

Expressed by the skin glands.

The protein resides in the secreted. Functionally, antimicrobial peptide. The protein is Brevinin-1R of Pelophylax ridibundus (Marsh frog).